Consider the following 388-residue polypeptide: Acetate kinase (388 aa).

Mg(2+) is bound at residue asparagine 7. Position 14 (lysine 14) interacts with ATP. Residue arginine 76 coordinates substrate. Aspartate 133 functions as the Proton donor/acceptor in the catalytic mechanism. ATP contacts are provided by residues 193-197, 267-269, and 315-319; these read HLGNG, DMR, and GIGEN. Glutamate 374 serves as a coordination point for Mg(2+).

This sequence belongs to the acetokinase family. As to quaternary structure, homodimer. Mg(2+) is required as a cofactor. Mn(2+) serves as cofactor.

The protein localises to the cytoplasm. The enzyme catalyses acetate + ATP = acetyl phosphate + ADP. Its pathway is metabolic intermediate biosynthesis; acetyl-CoA biosynthesis; acetyl-CoA from acetate: step 1/2. Its function is as follows. Catalyzes the formation of acetyl phosphate from acetate and ATP. Can also catalyze the reverse reaction. The protein is Acetate kinase of Micrococcus luteus (strain ATCC 4698 / DSM 20030 / JCM 1464 / CCM 169 / CCUG 5858 / IAM 1056 / NBRC 3333 / NCIMB 9278 / NCTC 2665 / VKM Ac-2230) (Micrococcus lysodeikticus).